Here is a 700-residue protein sequence, read N- to C-terminus: MARTTPLDRYRNVGIMAHIDAGKTTTTERILLYTGRTHRIGEVHDGSATMDWMEQEQERGITITSAATTCFWKGMDGQFEDHRVNIIDTPGHVDFTIEVERSLKVLDSACAVFCAVGGVEPQSETVWRQANKYNVPRIGFVNKMDRSGADFLRVCKQIKTRLGGNPVPMQIAIGAEESFEGVIDLISMKAIFWNEVDQGATYETRDIPIELQGLAKEQYEFMVESAAEANDELMEKYLEESKLSNHDIKKGIRLRAIKSEIIPMFCGSAFKNKGVQAVLDAMIMYMPSPLDVDAITGISDDKDETVVPRKADDNEPFAALAFKIATDPFVGNLTFFRVYSGVLEAGDFVYNSSKGKKERIGRMVQMHSNERDEIKEVRAGDIAAAIGLKDVTTGDTLCDMKEKIILERMEFPEPVIALAVEPKTKADQEKMGIALGKLAAEDPSFRVSTDEESGQTIIAGMGELHLDIIVDRMVREFDVECNVGAPQVSYREAITTMVEHQHKFVKQSGGRGQYGHVYLRIEPQEPGTGYEFVDEIKGGVIPKEYMPAVNKGVQEQMENGVLAGFPLVDIKVTVYDGSYHDVDSNEIAFKIAASKCLSEGVKMANPQLLEPMMAVEVLTPEDYMGDVMGDINRRRGIVSAMEDMPAGKQVKAEVPLAEMFGYSNDLRSITQGRANYSMEFAKYTAAPKNVADEIIEKLNK.

The region spanning 8-290 is the tr-type G domain; that stretch reads DRYRNVGIMA…AMIMYMPSPL (283 aa). GTP-binding positions include 17-24, 88-92, and 142-145; these read AHIDAGKT, DTPGH, and NKMD.

Belongs to the TRAFAC class translation factor GTPase superfamily. Classic translation factor GTPase family. EF-G/EF-2 subfamily.

The protein resides in the cytoplasm. Its function is as follows. Catalyzes the GTP-dependent ribosomal translocation step during translation elongation. During this step, the ribosome changes from the pre-translocational (PRE) to the post-translocational (POST) state as the newly formed A-site-bound peptidyl-tRNA and P-site-bound deacylated tRNA move to the P and E sites, respectively. Catalyzes the coordinated movement of the two tRNA molecules, the mRNA and conformational changes in the ribosome. The protein is Elongation factor G of Vesicomyosocius okutanii subsp. Calyptogena okutanii (strain HA).